Consider the following 634-residue polypeptide: tRNA uridine 5-carboxymethylaminomethyl modification enzyme MnmG (634 aa).

Residue 13 to 18 (GAGHAG) participates in FAD binding. 273-287 (GPRYCPSIEDKIIKF) lines the NAD(+) pocket.

It belongs to the MnmG family. As to quaternary structure, homodimer. Heterotetramer of two MnmE and two MnmG subunits. Requires FAD as cofactor.

The protein resides in the cytoplasm. Functionally, NAD-binding protein involved in the addition of a carboxymethylaminomethyl (cmnm) group at the wobble position (U34) of certain tRNAs, forming tRNA-cmnm(5)s(2)U34. In Buchnera aphidicola subsp. Cinara cedri (strain Cc), this protein is tRNA uridine 5-carboxymethylaminomethyl modification enzyme MnmG.